We begin with the raw amino-acid sequence, 411 residues long: Na(+)-translocating NADH-quinone reductase subunit F (411 aa).

Residues 5-25 form a helical membrane-spanning segment; the sequence is VILALGIAAFTVIVLVLVAII. Residues 36-130 enclose the 2Fe-2S ferredoxin-type domain; sequence GDITIDINDD…NMEVELPEEI (95 aa). Positions 73, 79, 82, and 114 each coordinate [2Fe-2S] cluster. Residues 133 to 273 form the FAD-binding FR-type domain; the sequence is VKKWECTVIS…SGPFGEFFAK (141 aa). The catalytic stretch occupies residues 276–393; sequence DAEMVFIGGG…PVMNAAVIKM (118 aa).

Belongs to the NqrF family. Composed of six subunits; NqrA, NqrB, NqrC, NqrD, NqrE and NqrF. Requires [2Fe-2S] cluster as cofactor. FAD serves as cofactor.

The protein localises to the cell inner membrane. The catalysed reaction is a ubiquinone + n Na(+)(in) + NADH + H(+) = a ubiquinol + n Na(+)(out) + NAD(+). Functionally, NQR complex catalyzes the reduction of ubiquinone-1 to ubiquinol by two successive reactions, coupled with the transport of Na(+) ions from the cytoplasm to the periplasm. The first step is catalyzed by NqrF, which accepts electrons from NADH and reduces ubiquinone-1 to ubisemiquinone by a one-electron transfer pathway. The polypeptide is Na(+)-translocating NADH-quinone reductase subunit F (Haemophilus influenzae (strain ATCC 51907 / DSM 11121 / KW20 / Rd)).